A 596-amino-acid chain; its full sequence is Probable ABC transporter ECU01_0200/ECU01_1410 (596 aa).

The next 3 helical transmembrane spans lie at 26-46 (ALMAVVAACIVLGKWFDVMSI), 173-193 (LVPILFTAAAYAAYTCVMLRI), and 289-309 (LSVLFSFVLSIDASMWTLGGI). The 280-residue stretch at 39–318 (KWFDVMSIKR…IARDLGFWLT (280 aa)) folds into the ABC transmembrane type-1 domain. Residues 361 to 593 (VEFDDVSFAY…RGMYWRMKTA (233 aa)) enclose the ABC transporter domain. Residues Tyr-370 and 400–411 (GRPGSGKSTILR) contribute to the ATP site.

Belongs to the ABC transporter superfamily. ABCB family. Heavy Metal importer (TC 3.A.1.210) subfamily.

It is found in the membrane. This is Probable ABC transporter ECU01_0200/ECU01_1410 from Encephalitozoon cuniculi (strain GB-M1) (Microsporidian parasite).